Here is an 837-residue protein sequence, read N- to C-terminus: Tuftelin-interacting protein 11 (837 aa).

2 stretches are compositionally biased toward basic and acidic residues: residues 1–13 (MSLS…GEGR) and 53–64 (VWAERDSDDERP). Disordered stretches follow at residues 1–21 (MSLS…DDER), 53–72 (VWAE…KRAR), and 85–133 (LKKG…KGFA). A required for interaction with DHX15 region spans residues 1 to 50 (MSLSHLYRDGEGRIDDDDDERENFEITDWDLQNEFNPNRQRHWQTKEEAT). Phosphoserine occurs at positions 2, 59, and 98. The span at 91-102 (EEAELEDSDDEE) shows a compositional bias: acidic residues. Over residues 103–116 (RPVKQDDFPKDFGP) the composition is skewed to basic and acidic residues. At serine 144 the chain carries Phosphoserine. Residues 149–195 (TKGIGQKLLQKMGYVPGRGLGKNAQGIINPIEAKQRKGKGAVGAYGS) form the G-patch domain. Residues 179–236 (IEAKQRKGKGAVGAYGSERTTQSMQDFPVVDSEEEAEEEFQKELSQWRKDPSGSKKKP) are disordered. Position 210 is a phosphoserine (serine 210). Positions 217–231 (EFQKELSQWRKDPSG) are enriched in basic and acidic residues. Residues 700-705 (VKDKFN) carry the Nuclear localization signal motif. The segment at 710–734 (IMNRAVSSNVGAYMQPGARENIAYL) is required for nuclear speckle localization.

It belongs to the TFP11/STIP family. Identified in the spliceosome C complex. Found in the Intron Large (IL) complex, a post-mRNA release spliceosomal complex containing the excised intron, U2, U5 and U6 snRNPs, and splicing factors. Interacts with TUFT1. Interacts with DHX15; indicative for a recruitment of DHX15 to the IL complex. Interacts with GCFC2.

Its subcellular location is the cytoplasm. It localises to the nucleus. Its function is as follows. Involved in pre-mRNA splicing, specifically in spliceosome disassembly during late-stage splicing events. Intron turnover seems to proceed through reactions in two lariat-intron associated complexes termed Intron Large (IL) and Intron Small (IS). In cooperation with DHX15 seems to mediate the transition of the U2, U5 and U6 snRNP-containing IL complex to the snRNP-free IS complex leading to efficient debranching and turnover of excised introns. May play a role in the differentiation of ameloblasts and odontoblasts or in the forming of the enamel extracellular matrix. The sequence is that of Tuftelin-interacting protein 11 (TFIP11) from Macaca mulatta (Rhesus macaque).